We begin with the raw amino-acid sequence, 411 residues long: Branched-chain-amino-acid aminotransferase, cytosolic (411 aa).

N6-(pyridoxal phosphate)lysine is present on Lys247.

Belongs to the class-IV pyridoxal-phosphate-dependent aminotransferase family. As to quaternary structure, homodimer. Pyridoxal 5'-phosphate is required as a cofactor. Post-translationally, the N-terminus is blocked. Brain, low expression in ovary and placenta, but not found in liver, kidney, and skeletal muscle.

It is found in the cytoplasm. The catalysed reaction is L-leucine + 2-oxoglutarate = 4-methyl-2-oxopentanoate + L-glutamate. The enzyme catalyses L-isoleucine + 2-oxoglutarate = (S)-3-methyl-2-oxopentanoate + L-glutamate. It catalyses the reaction L-valine + 2-oxoglutarate = 3-methyl-2-oxobutanoate + L-glutamate. Functionally, catalyzes the first reaction in the catabolism of the essential branched chain amino acids leucine, isoleucine, and valine. This Rattus norvegicus (Rat) protein is Branched-chain-amino-acid aminotransferase, cytosolic (Bcat1).